Reading from the N-terminus, the 791-residue chain is Outer membrane protein assembly factor BamA (791 aa).

POTRA domains lie at 59 to 130, 131 to 209, 212 to 298, 301 to 383, and 386 to 459; these read NAIA…VTEK, PRID…VEEG, LYIK…VKEG, YKLG…IRKR, and VYIN…VKEQ.

Belongs to the BamA family. In terms of assembly, part of the Bam complex.

The protein localises to the cell outer membrane. Its function is as follows. Part of the outer membrane protein assembly complex, which is involved in assembly and insertion of beta-barrel proteins into the outer membrane. In Nitratidesulfovibrio vulgaris (strain ATCC 29579 / DSM 644 / CCUG 34227 / NCIMB 8303 / VKM B-1760 / Hildenborough) (Desulfovibrio vulgaris), this protein is Outer membrane protein assembly factor BamA.